The following is a 189-amino-acid chain: Auxin-responsive protein IAA6 (189 aa).

An EAR-like (transcriptional repression) motif is present at residues 13 to 17 (LRLGL). In terms of domain architecture, PB1 spans 93 to 178 (IGYVKVSMDG…SCKRLRIVKR (86 aa)).

It belongs to the Aux/IAA family. Homodimers and heterodimers. Interacts with TPL. In terms of tissue distribution, highly expressed in stems and flowers.

It is found in the nucleus. Its function is as follows. Aux/IAA proteins are short-lived transcriptional factors that function as repressors of early auxin response genes at low auxin concentrations. Repression is thought to result from the interaction with auxin response factors (ARFs), proteins that bind to the auxin-responsive promoter element (AuxRE). Formation of heterodimers with ARF proteins may alter their ability to modulate early auxin response genes expression. This chain is Auxin-responsive protein IAA6 (IAA6), found in Arabidopsis thaliana (Mouse-ear cress).